The sequence spans 82 residues: DNA-directed RNA polymerase subunit omega (82 aa).

It belongs to the RNA polymerase subunit omega family. As to quaternary structure, the RNAP catalytic core consists of 2 alpha, 1 beta, 1 beta' and 1 omega subunit. When a sigma factor is associated with the core the holoenzyme is formed, which can initiate transcription.

It catalyses the reaction RNA(n) + a ribonucleoside 5'-triphosphate = RNA(n+1) + diphosphate. Promotes RNA polymerase assembly. Latches the N- and C-terminal regions of the beta' subunit thereby facilitating its interaction with the beta and alpha subunits. In Lachnoclostridium phytofermentans (strain ATCC 700394 / DSM 18823 / ISDg) (Clostridium phytofermentans), this protein is DNA-directed RNA polymerase subunit omega.